A 165-amino-acid polypeptide reads, in one-letter code: HTH-type transcriptional regulator MmpR5 (165 aa).

Positions methionine 1 to serine 151 constitute an HTH marR-type domain. A DNA-binding region (H-T-H motif) is located at residues serine 53–glutamine 76.

In terms of assembly, homodimer.

Its function is as follows. Controls the expression level of the Mmps2-MmpL2, MmpS4-MmpL4, and MmpS5-MmpL5 transport systems. Also controls its own expression. Acts by binding directly to the promoter regions. This is HTH-type transcriptional regulator MmpR5 from Mycobacterium tuberculosis (strain ATCC 25618 / H37Rv).